Here is a 376-residue protein sequence, read N- to C-terminus: Chaperone protein DnaJ (376 aa).

The region spanning 5–70 (DYYEVLGVGR…DKKAAYDQFG (66 aa)) is the J domain. The CR-type zinc finger occupies 132–210 (GLTKELKVPT…CHGNGRVEKT (79 aa)). Residues C145, C148, C162, C165, C184, C187, C198, and C201 each coordinate Zn(2+). 4 CXXCXGXG motif repeats span residues 145 to 152 (CDSCDGSG), 162 to 169 (CGTCHGMG), 184 to 191 (CPTCHGRG), and 198 to 205 (CSKCHGNG).

Belongs to the DnaJ family. As to quaternary structure, homodimer. Requires Zn(2+) as cofactor.

It localises to the cytoplasm. Functionally, participates actively in the response to hyperosmotic and heat shock by preventing the aggregation of stress-denatured proteins and by disaggregating proteins, also in an autonomous, DnaK-independent fashion. Unfolded proteins bind initially to DnaJ; upon interaction with the DnaJ-bound protein, DnaK hydrolyzes its bound ATP, resulting in the formation of a stable complex. GrpE releases ADP from DnaK; ATP binding to DnaK triggers the release of the substrate protein, thus completing the reaction cycle. Several rounds of ATP-dependent interactions between DnaJ, DnaK and GrpE are required for fully efficient folding. Also involved, together with DnaK and GrpE, in the DNA replication of plasmids through activation of initiation proteins. The protein is Chaperone protein DnaJ of Shewanella amazonensis (strain ATCC BAA-1098 / SB2B).